The sequence spans 82 residues: Sulfur carrier protein TusA (82 aa).

Cys19 serves as the catalytic Cysteine persulfide intermediate.

The protein belongs to the sulfur carrier protein TusA family.

Its subcellular location is the cytoplasm. Sulfur carrier protein which probably makes part of a sulfur-relay system. The sequence is that of Sulfur carrier protein TusA from Vibrio cholerae serotype O1 (strain ATCC 39541 / Classical Ogawa 395 / O395).